Consider the following 208-residue polypeptide: 2-phospho-L-lactate guanylyltransferase (208 aa).

This sequence belongs to the CofC family. Homodimer.

The catalysed reaction is (2S)-2-phospholactate + GTP + H(+) = (2S)-lactyl-2-diphospho-5'-guanosine + diphosphate. Its pathway is cofactor biosynthesis; coenzyme F420 biosynthesis. Its function is as follows. Guanylyltransferase that catalyzes the activation of (2S)-2-phospholactate (2-PL) as (2S)-lactyl-2-diphospho-5'-guanosine, via the condensation of 2-PL with GTP. It is involved in the biosynthesis of coenzyme F420, a hydride carrier cofactor. The chain is 2-phospho-L-lactate guanylyltransferase from Methanosarcina acetivorans (strain ATCC 35395 / DSM 2834 / JCM 12185 / C2A).